A 247-amino-acid chain; its full sequence is Carboxy-S-adenosyl-L-methionine synthase (247 aa).

S-adenosyl-L-methionine contacts are provided by residues Tyr39, 64–66 (GCS), 89–90 (DN), 117–118 (DI), Asn132, and Arg199.

It belongs to the class I-like SAM-binding methyltransferase superfamily. Cx-SAM synthase family. In terms of assembly, homodimer.

It catalyses the reaction prephenate + S-adenosyl-L-methionine = carboxy-S-adenosyl-L-methionine + 3-phenylpyruvate + H2O. Functionally, catalyzes the conversion of S-adenosyl-L-methionine (SAM) to carboxy-S-adenosyl-L-methionine (Cx-SAM). The chain is Carboxy-S-adenosyl-L-methionine synthase from Cronobacter sakazakii (strain ATCC BAA-894) (Enterobacter sakazakii).